A 512-amino-acid chain; its full sequence is 2-isopropylmalate synthase (512 aa).

Positions 5-268 constitute a Pyruvate carboxyltransferase domain; that stretch reads LIIFDTTLRD…DLNIDTTHIV (264 aa). Positions 14, 202, 204, and 239 each coordinate Mn(2+). A regulatory domain region spans residues 394 to 512; sequence AFVSLSQHSE…SQAEKVAAQG (119 aa).

It belongs to the alpha-IPM synthase/homocitrate synthase family. LeuA type 1 subfamily. Homodimer. Mn(2+) is required as a cofactor.

It is found in the cytoplasm. It carries out the reaction 3-methyl-2-oxobutanoate + acetyl-CoA + H2O = (2S)-2-isopropylmalate + CoA + H(+). The protein operates within amino-acid biosynthesis; L-leucine biosynthesis; L-leucine from 3-methyl-2-oxobutanoate: step 1/4. Catalyzes the condensation of the acetyl group of acetyl-CoA with 3-methyl-2-oxobutanoate (2-ketoisovalerate) to form 3-carboxy-3-hydroxy-4-methylpentanoate (2-isopropylmalate). This is 2-isopropylmalate synthase from Variovorax paradoxus (strain S110).